We begin with the raw amino-acid sequence, 220 residues long: Fructose-6-phosphate aldolase 1 (220 aa).

Lys85 serves as the catalytic Schiff-base intermediate with substrate.

The protein belongs to the transaldolase family. Type 3A subfamily. Homodecamer. Five subunits are arranged as a pentamer, and two ring-like pentamers pack like a donut to form the decamer.

It localises to the cytoplasm. It carries out the reaction beta-D-fructose 6-phosphate = dihydroxyacetone + D-glyceraldehyde 3-phosphate. Its activity is regulated as follows. Inhibited by glycerol, inorganic phosphate and arabinose 5-phosphate. Catalyzes the reversible formation of fructose 6-phosphate from dihydroxyacetone (DHA) and D-glyceraldehyde 3-phosphate via an aldolization reaction. Can utilize several aldehydes as acceptor compounds in vitro, and hydroxyacetone (HA) or 1-hydroxy-butan-2-one as alternative donor substrate. Is also able to catalyze the direct stereoselective self-aldol addition of glycolaldehyde to furnish D-(-)-threose, and cross-aldol reactions of glycolaldehyde to other aldehyde acceptors. Is not able to cleave fructose, fructose 1-phosphate, glucose 6-phosphate, sedoheptulose 1,7-bisphosphate, xylulose 5-phosphate, ribulose 5-phosphate, and fructose 1,6-bisphosphate; cannot use dihydroxyacetone phosphate as donor compound nor D-glyceraldehyde as acceptor. Does not display transaldolase activity. This Escherichia coli (strain K12) protein is Fructose-6-phosphate aldolase 1 (fsaA).